Here is a 793-residue protein sequence, read N- to C-terminus: Serine/threonine-protein kinase MARK1 (793 aa).

Positions Met-1–Ile-40 are disordered. Position 5 is a phosphothreonine (Thr-5). The Protein kinase domain occupies Tyr-60–Met-311. ATP contacts are provided by residues Ile-66–Val-74 and Lys-89. The active-site Proton acceptor is Asp-182. A Phosphothreonine modification is found at Thr-208. At Thr-215 the chain carries Phosphothreonine; by LKB1 and TAOK1. Ser-219 carries the post-translational modification Phosphoserine; by GSK3-beta. Positions Asp-329–Arg-370 constitute a UBA domain. 2 disordered regions span residues Gly-377–Met-499 and Leu-517–Ser-697. Polar residues predominate over residues Ser-380 to Ser-403. Phosphoserine occurs at positions 382, 390, 393, 403, 423, and 444. Positions Ser-447–Arg-459 are enriched in basic and acidic residues. Positions Gly-462–Thr-473 are enriched in polar residues. Ser-475 is subject to Phosphoserine. Residues Ala-487–Met-499 are compositionally biased toward polar residues. Low complexity-rich tracts occupy residues Ser-523–Ala-547 and Pro-585–Pro-599. At Ser-588 the chain carries Phosphoserine. Thr-613 carries the post-translational modification Phosphothreonine; by PKC/PRKCZ. The segment covering Gly-647–Thr-657 has biased composition (polar residues). Basic and acidic residues-rich tracts occupy residues Val-661–Thr-676 and Glu-683–Pro-695. At Ser-666 the chain carries Phosphoserine. Positions Asp-744–Leu-793 constitute a KA1 domain.

Belongs to the protein kinase superfamily. CAMK Ser/Thr protein kinase family. SNF1 subfamily. Interacts with MAPT/TAU. Mg(2+) serves as cofactor. Post-translationally, phosphorylation at Thr-613 by PRKCZ/aPKC in polarized epithelial cells inhibits the kinase activity. Phosphorylated at Thr-215 by STK11/LKB1 in complex with STE20-related adapter-alpha (STRADA) pseudo kinase and CAB39. Phosphorylation at Thr-215 by TAOK1 activates the kinase activity, leading to phosphorylation and detachment of MAPT/TAU from microtubules. Phosphorylation at Ser-219 by GSK3-beta (GSK3B) inhibits the kinase activity. In terms of tissue distribution, highly expressed in brain and spleen and at lower levels in kidney and skeletal muscle.

It localises to the cell membrane. It is found in the cytoplasm. Its subcellular location is the cytoskeleton. The protein localises to the cell projection. The protein resides in the dendrite. The catalysed reaction is L-seryl-[protein] + ATP = O-phospho-L-seryl-[protein] + ADP + H(+). It catalyses the reaction L-threonyl-[protein] + ATP = O-phospho-L-threonyl-[protein] + ADP + H(+). It carries out the reaction L-seryl-[tau protein] + ATP = O-phospho-L-seryl-[tau protein] + ADP + H(+). The enzyme catalyses L-threonyl-[tau protein] + ATP = O-phospho-L-threonyl-[tau protein] + ADP + H(+). Activated by phosphorylation on Thr-215. Inhibited by phosphorylation at Ser-219. Functionally, serine/threonine-protein kinase. Involved in cell polarity and microtubule dynamics regulation. Phosphorylates DCX, MAP2 and MAP4. Phosphorylates the microtubule-associated protein MAPT/TAU. Involved in cell polarity by phosphorylating the microtubule-associated proteins MAP2, MAP4 and MAPT/TAU at KXGS motifs, causing detachment from microtubules, and their disassembly. Involved in the regulation of neuronal migration through its dual activities in regulating cellular polarity and microtubule dynamics, possibly by phosphorylating and regulating DCX. Also acts as a positive regulator of the Wnt signaling pathway, probably by mediating phosphorylation of dishevelled proteins (DVL1, DVL2 and/or DVL3). The polypeptide is Serine/threonine-protein kinase MARK1 (Rattus norvegicus (Rat)).